Reading from the N-terminus, the 37-residue chain is Delta-amaurobitoxin-Pl1b (37 aa).

4 cysteine pairs are disulfide-bonded: C2–C18, C9–C23, C17–C33, and C25–C31. S37 carries the serine amide modification.

This sequence belongs to the neurotoxin 07 (Beta/delta-agtx) family. 02 (aga-3) subfamily. Expressed by the venom gland.

The protein localises to the secreted. Functionally, insecticidal toxin. Binds to site 4 of insect voltage-gated sodium channel (Nav) and inhibits channel inactivation. In vivo, it lethal to lepidopteran larvae. Has no adverse affects when intracerebroventricularly injected in mice at a dose of 0.2 ug, but causes reversible paralysis of legs when injected intracerebroventricularly in mice at a dose of 2.0 ug. The protein is Delta-amaurobitoxin-Pl1b of Pireneitega luctuosa (Tangled nest spider).